We begin with the raw amino-acid sequence, 60 residues long: Large ribosomal subunit protein uL30 (60 aa).

Belongs to the universal ribosomal protein uL30 family. In terms of assembly, part of the 50S ribosomal subunit.

This is Large ribosomal subunit protein uL30 from Lachnoclostridium phytofermentans (strain ATCC 700394 / DSM 18823 / ISDg) (Clostridium phytofermentans).